Consider the following 99-residue polypeptide: Mu-hexatoxin-Mg1c (99 aa).

Cystine bridges form between Cys61–Cys75, Cys68–Cys80, and Cys74–Cys94.

Belongs to the neurotoxin 14 (magi-1) family. 09 (magi-1) subfamily. Expressed by the venom gland.

Its subcellular location is the secreted. Inhibits voltage-gated sodium channels by binding to site 3. Insecticidal neurotoxin. This Macrothele gigas (Japanese funnel web spider) protein is Mu-hexatoxin-Mg1c.